The primary structure comprises 564 residues: Protein CPR-5 (564 aa).

The segment at Met-1–Val-87 is disordered. The span at Pro-12–Ser-28 shows a compositional bias: polar residues. Over residues Gly-29–Met-38 the composition is skewed to basic and acidic residues. Residues Ser-69–Thr-84 are compositionally biased toward low complexity. 5 helical membrane passes run Ile-347–Tyr-367, Val-411–Leu-431, Pro-443–Val-463, Leu-472–Leu-492, and Val-526–Phe-546.

Interacts with SIM and SMR1. In terms of tissue distribution, ubiquitous.

The protein localises to the membrane. The protein resides in the nucleus membrane. Functionally, may play a role in transcriptional processes. Negatively regulates the senescence and chlorotic lesions induced by biotic (e.g. pathogens) and abiotic (e.g. sugars, darkness) agents, probably by controlling programmed cell death (pcd). Negative regulator of plant programmed cell death (PCD) and effector-triggered immunity (ETI). Promotes cell division and endoreduplication (e.g. in trichomes). This Arabidopsis thaliana (Mouse-ear cress) protein is Protein CPR-5.